Consider the following 624-residue polypeptide: Polygalacturonase 1 beta-like protein 2 (624 aa).

The signal sequence occupies residues 1 to 26 (MNNIEATLFLCFFCIFSSSNVHFAGA). One copy of the FXXY 1 repeat lies at 121-124 (FAAY). Asn128 is a glycosylation site (N-linked (GlcNAc...) asparagine). 11 FXXY repeats span residues 129-132 (FTNY), 143-146 (FKNY), 157-160 (FRRY), 171-174 (FTNY), 185-188 (FTTY), 199-202 (FTNY), 213-216 (FTSY), 227-230 (FTTY), 241-244 (FTSY), 255-258 (FSGY), and 269-272 (FTKY). Asn145 carries an N-linked (GlcNAc...) asparagine glycan. Residues 199–219 (FTNYNTDANEPNGRFTSYSDK) form a disordered region. Asn280 carries an N-linked (GlcNAc...) asparagine glycan. FXXY repeat units lie at residues 283-286 (FTSY), 297-300 (FKGY), 311-314 (FKNY), 325-328 (FSSY), and 339-342 (FVNY). N-linked (GlcNAc...) asparagine glycosylation is present at Asn352. The stretch at 353–356 (FTGY) is one FXXY 18 repeat. N-linked (GlcNAc...) asparagine glycosylation occurs at Asn364. 3 FXXY repeats span residues 367 to 370 (FKTY), 376 to 379 (FKVY), and 386 to 389 (FARY). Residues Asn392 and Asn463 are each glycosylated (N-linked (GlcNAc...) asparagine). In terms of domain architecture, BURP spans 409 to 623 (FFREAMLKEG…FENDMTWNII (215 aa)).

In terms of tissue distribution, expressed in flowers and stems.

It is found in the secreted. The protein resides in the extracellular space. The protein localises to the apoplast. Its subcellular location is the cell wall. Its function is as follows. Involved in cell size determination. In Arabidopsis thaliana (Mouse-ear cress), this protein is Polygalacturonase 1 beta-like protein 2.